The sequence spans 266 residues: Vitamin B12-binding protein (266 aa).

An N-terminal signal peptide occupies residues 1 to 22; that stretch reads MAKQMFRALGALLLTLPVWLYA. A Fe/B12 periplasmic-binding domain is found at 25–266; that stretch reads RVITLSPANT…QLCNALSQVN (242 aa). Cyanocob(III)alamin is bound by residues tyrosine 50 and 242–246; that span reads DWFER. Cysteine 183 and cysteine 259 form a disulfide bridge.

This sequence belongs to the BtuF family. In terms of assembly, the complex is composed of two ATP-binding proteins (BtuD), two transmembrane proteins (BtuC) and a solute-binding protein (BtuF).

It is found in the periplasm. Its function is as follows. Part of the ABC transporter complex BtuCDF involved in vitamin B12 import. Binds vitamin B12 and delivers it to the periplasmic surface of BtuC. The chain is Vitamin B12-binding protein from Salmonella typhi.